We begin with the raw amino-acid sequence, 339 residues long: Zinc transporter 3 (339 aa).

Positions 1–25 (MKTKNVKLLFFFFSVSLLLIAVVNA) are cleaved as a signal peptide. Over 26 to 54 (AEGHSHGGPKCECSHEDDHENKAGARKYK) the chain is Extracellular. Residues 55 to 75 (IAAIPTVLIAGIIGVLFPLLG) form a helical membrane-spanning segment. The Cytoplasmic portion of the chain corresponds to 76–86 (KVFPSLRPETC). Residues 87–107 (FFFVTKAFAAGVILATGFMHV) form a helical membrane-spanning segment. Residues 108–123 (LPEAYEMLNSPCLTSE) are Extracellular-facing. Residues 124–144 (AWEFPFTGFIAMIAAILTLSV) form a helical membrane-spanning segment. The Cytoplasmic segment spans residues 145–184 (DTFATSSFYKSHCKASKRVSDGETGESSVDSEKVQILRTR). Residues 185–205 (VIAQVLELGIIVHSVVIGISL) traverse the membrane as a helical segment. Residues 206–216 (GASQSPDAAKA) lie on the Extracellular side of the membrane. The chain crosses the membrane as a helical span at residues 217 to 237 (LFIALMFHQCFEGLGLGGCIA). Over 238–247 (QGKFKCLSVT) the chain is Cytoplasmic. A helical transmembrane segment spans residues 248–268 (IMSTFFAITTPIGIVVGMGIA). Residues 269–278 (NSYDESSPTA) are Extracellular-facing. Residues 279-299 (LIVQGVLNAASAGILIYMSLV) traverse the membrane as a helical segment. At 300–315 (DLLAADFTHPKMQSNT) the chain is on the cytoplasmic side. The chain crosses the membrane as a helical span at residues 316 to 336 (GLQIMAHIALLLGAGLMSLLA). Residues 337–339 (KWA) lie on the Extracellular side of the membrane.

It belongs to the ZIP transporter (TC 2.A.5) family. In terms of tissue distribution, expressed predominantly in the roots of zinc-deficient plants.

It localises to the cell membrane. Its function is as follows. Mediates zinc uptake from the rhizosphere. May also transport other divalent cations. The protein is Zinc transporter 3 (ZIP3) of Arabidopsis thaliana (Mouse-ear cress).